Consider the following 170-residue polypeptide: Adenine phosphoribosyltransferase (170 aa).

It belongs to the purine/pyrimidine phosphoribosyltransferase family. In terms of assembly, homodimer.

It is found in the cytoplasm. The enzyme catalyses AMP + diphosphate = 5-phospho-alpha-D-ribose 1-diphosphate + adenine. It participates in purine metabolism; AMP biosynthesis via salvage pathway; AMP from adenine: step 1/1. Catalyzes a salvage reaction resulting in the formation of AMP, that is energically less costly than de novo synthesis. In Mycoplasma mycoides subsp. mycoides SC (strain CCUG 32753 / NCTC 10114 / PG1), this protein is Adenine phosphoribosyltransferase.